We begin with the raw amino-acid sequence, 260 residues long: MLLAIDAGNTNIVFALVDGGAIVARWRIATDARRTADEYAVWLHQLLQLEGHDRSVIEAVIIATVVPRALHNLEVLASKYFGVEALVAGRPPVEWGITLDVDEPQNVGADRAVNVIAAHKRHPGDLILIDFGTATTFDVVDYSGAYKGGIIAPGINLSLDALVAAAAKLPRIAIEAPETSTVIGRTTQDQMLIGIYFGYVAMIEGLVARMKAEIGRPATVIATGGLATLFERHVKLFDSIEPDLTIQGLGIMYDRLKTGP.

Position 6–13 (6–13 (DAGNTNIV)) interacts with ATP. 108 to 111 (GADR) contributes to the substrate binding site. D110 acts as the Proton acceptor in catalysis. Residue D130 participates in K(+) binding. T133 contributes to the ATP binding site. Residue T187 coordinates substrate.

Belongs to the type III pantothenate kinase family. In terms of assembly, homodimer. The cofactor is NH4(+). K(+) serves as cofactor.

The protein resides in the cytoplasm. It catalyses the reaction (R)-pantothenate + ATP = (R)-4'-phosphopantothenate + ADP + H(+). The protein operates within cofactor biosynthesis; coenzyme A biosynthesis; CoA from (R)-pantothenate: step 1/5. Functionally, catalyzes the phosphorylation of pantothenate (Pan), the first step in CoA biosynthesis. The chain is Type III pantothenate kinase from Rhizorhabdus wittichii (strain DSM 6014 / CCUG 31198 / JCM 15750 / NBRC 105917 / EY 4224 / RW1) (Sphingomonas wittichii).